Consider the following 375-residue polypeptide: Protein NDRG3 (375 aa).

Residues 326-375 form a disordered region; it reads RSRTHSASSSGSMEIPRSRSHTSNAQLKSSSNNSLSNQIQETPQTIELSC. Residues 348 to 363 show a composition bias toward low complexity; it reads SNAQLKSSSNNSLSNQ. Positions 364 to 375 are enriched in polar residues; that stretch reads IQETPQTIELSC.

Belongs to the NDRG family.

The protein is Protein NDRG3 of Xenopus laevis (African clawed frog).